A 553-amino-acid polypeptide reads, in one-letter code: MLNNRASKIGAILLALFFVLTYLFPLNSRLLWQPDETRYAEISREMVVSGNWIVPHMLDIRYFEKPIAGYWINNISQLIFGHTNFAVRFGSVISILLSALLIYLLARMMWRNRQVAFVASLIYLSMFLVFSVGTYSVLDPMLALWVTASMVCCFWALKATTAKTRILAWITLGLACGMAFMTKGFLALAIPVIVMIPVTLYQKQFTRMLLYGVLAVLSAALISLPWVLAVAKAEPDYWHYFFWVEHIQRFSGDDAQHSSPFWYYIPIILLGVIPWLGLLPGALTSAWKKRRKRPELFFLLCWFVVPFLFFSIAKGKLPTYMLPFMGPLAMLMAKYGVDCARKFKMKALRINGYINIFIGVAAVVAILIIQLVSSKPIYMPYEWSKWVLAIVAFSLWGIIGYLCSTLNGKHWLWAASCSLGVSLCIGQAIPNSSIDGKLPQEFIRQNIDTLNASKYIVSNSVGVGAGLAWELQRSDIYLYERTGELTYGIEYPDSQHRLLKPESFEQWLENARKEGNVSVVITYKDPKKLAQMPRPEELVTNRRMAILTYEKRK.

The next 12 membrane-spanning stretches (helical) occupy residues Ala6–Leu26, Phe85–Leu105, Val115–Tyr135, Val137–Leu157, Met178–Val198, Met208–Leu228, Phe261–Gly281, Glu295–Gly315, Leu317–Val337, Gly352–Val372, Trp386–Leu406, and His410–Pro430.

This sequence belongs to the glycosyltransferase 83 family.

It is found in the cell inner membrane. The enzyme catalyses 4-amino-4-deoxy-alpha-L-arabinopyranosyl di-trans,octa-cis-undecaprenyl phosphate + lipid IVA = lipid IIA + di-trans,octa-cis-undecaprenyl phosphate.. The protein operates within lipopolysaccharide metabolism; 4-amino-4-deoxy-beta-L-arabinose-lipid A biosynthesis. Functionally, catalyzes the transfer of the L-Ara4N moiety of the glycolipid undecaprenyl phosphate-alpha-L-Ara4N to lipid A. The modified arabinose is attached to lipid A and is required for resistance to polymyxin and cationic antimicrobial peptides. The protein is Undecaprenyl phosphate-alpha-4-amino-4-deoxy-L-arabinose arabinosyl transferase 2 of Proteus mirabilis (strain HI4320).